We begin with the raw amino-acid sequence, 321 residues long: tRNA-dihydrouridine synthase B (321 aa).

FMN contacts are provided by residues 16-18 (PMA) and Gln70. The active-site Proton donor is Cys100. FMN is bound by residues Lys139, 200–202 (NGD), and 224–225 (GR).

It belongs to the Dus family. DusB subfamily. It depends on FMN as a cofactor.

It catalyses the reaction a 5,6-dihydrouridine in tRNA + NAD(+) = a uridine in tRNA + NADH + H(+). The enzyme catalyses a 5,6-dihydrouridine in tRNA + NADP(+) = a uridine in tRNA + NADPH + H(+). Functionally, catalyzes the synthesis of 5,6-dihydrouridine (D), a modified base found in the D-loop of most tRNAs, via the reduction of the C5-C6 double bond in target uridines. The polypeptide is tRNA-dihydrouridine synthase B (Klebsiella pneumoniae).